Consider the following 382-residue polypeptide: uncharacterized protein (382 aa).

12 consecutive transmembrane segments (helical) span residues 8-28, 39-61, 75-95, 102-122, 131-151, 157-177, 204-224, 236-256, 265-284, 289-311, 325-345, and 349-369; these read VLLL…LNTL, PTWQ…TLLT, YLAS…VGFW, FIAG…LMCS, LLAA…LMIS, LMSV…PLLF, LGVN…GLMP, GIGF…WPIG, LLVL…AMLG, APAL…AWAC, ALLL…AMLM, and SDNL…LMLL.

It belongs to the major facilitator superfamily. YcaD (TC 2.A.1.26) family.

The protein localises to the cell inner membrane. This is an uncharacterized protein from Enterobacter sp. (strain 638).